We begin with the raw amino-acid sequence, 968 residues long: Putative pectinesterase/pectinesterase inhibitor 26 (968 aa).

Residues 33 to 53 (IGISVAVLVAIIISSTVTIAI) form a helical membrane-spanning segment. Residues 71 to 230 (LTPAASLKTV…TEFTSNSLAI (160 aa)) form a pectinesterase inhibitor 26 A region. Residues Asn101, Asn158, Asn219, Asn295, Asn352, Asn400, Asn464, Asn541, Asn559, and Asn603 are each glycosylated (N-linked (GlcNAc...) asparagine). The pectinesterase inhibitor 26 B stretch occupies residues 265-430 (LTPAASLRNV…RKFTSNSLAI (166 aa)). Residues 453–614 (PTPSSVLRTV…TEFTSNSLAI (162 aa)) are pectinesterase inhibitor 26 C. Residues 660–954 (HVTVAADGSG…FTVKYFLRGD (295 aa)) are pectinesterase 26. Position 735 (Thr735) interacts with substrate. A glycan (N-linked (GlcNAc...) asparagine) is linked at Asn737. Gln765 lines the substrate pocket. The Proton donor; for pectinesterase activity role is filled by Asp788. Cys802 and Cys822 are disulfide-bonded. Asp809 functions as the Nucleophile; for pectinesterase activity in the catalytic mechanism. Residue Asn863 is glycosylated (N-linked (GlcNAc...) asparagine). Residues Arg872 and Trp874 each coordinate substrate. A glycan (N-linked (GlcNAc...) asparagine) is linked at Asn900.

In the N-terminal section; belongs to the PMEI family. The protein in the C-terminal section; belongs to the pectinesterase family. Expressed in flowers.

The protein localises to the membrane. The catalysed reaction is [(1-&gt;4)-alpha-D-galacturonosyl methyl ester](n) + n H2O = [(1-&gt;4)-alpha-D-galacturonosyl](n) + n methanol + n H(+). The protein operates within glycan metabolism; pectin degradation; 2-dehydro-3-deoxy-D-gluconate from pectin: step 1/5. Acts in the modification of cell walls via demethylesterification of cell wall pectin. This is Putative pectinesterase/pectinesterase inhibitor 26 (PME26) from Arabidopsis thaliana (Mouse-ear cress).